We begin with the raw amino-acid sequence, 117 residues long: Large ribosomal subunit protein uL18 (117 aa).

It belongs to the universal ribosomal protein uL18 family. Part of the 50S ribosomal subunit; part of the 5S rRNA/L5/L18/L25 subcomplex. Contacts the 5S and 23S rRNAs.

Its function is as follows. This is one of the proteins that bind and probably mediate the attachment of the 5S RNA into the large ribosomal subunit, where it forms part of the central protuberance. The protein is Large ribosomal subunit protein uL18 of Vibrio proteolyticus (Aeromonas proteolytica).